The primary structure comprises 492 residues: Osmoregulated proline transporter OpuE (492 aa).

A run of 13 helical transmembrane segments spans residues 3–23, 40–60, 62–82, 125–145, 161–181, 190–210, 224–244, 271–291, 314–334, 365–385, 394–414, 424–444, and 449–469; these read IEIIISLGIYFIAMLLIGWYA, LGPFVTALSAGAADMSGWMLM, VPGAMFATGLSTLWLALGLTI, IVSALIIMIFFTLYTSSGMVS, GLFLTTAVVVLYTLFGGFLAV, AIMFAALVLVPIVAFTHVGGV, LLDIFKGASVISIISYLAWGL, IGMSWMIITVLGSVLTGLIGV, ILFHPLITGFLLSAILAAIMS, LVMIGRLSVLVIAVIAVLLSL, LVGYAWAGFGSAFGPAILLSL, ALAAMIVGAATVLIWITTGLA, and VYEIIPGFILSMIAGIIVSMI.

It belongs to the sodium:solute symporter (SSF) (TC 2.A.21) family.

Its subcellular location is the cell membrane. It carries out the reaction L-proline(in) + Na(+)(in) = L-proline(out) + Na(+)(out). Catalyzes the uptake of extracellular proline under high-osmolarity growth conditions. Essential for the use of proline present in the environment as an osmoprotectant. This is Osmoregulated proline transporter OpuE from Bacillus subtilis (strain 168).